The chain runs to 412 residues: Trehalose synthase (412 aa).

The protein belongs to the glycosyltransferase group 1 family. Glycosyltransferase 4 subfamily. In terms of assembly, homodimer. Requires Mg(2+) as cofactor.

The catalysed reaction is an NDP-alpha-D-glucose + D-glucose = alpha,alpha-trehalose + a ribonucleoside 5'-diphosphate + H(+). Functionally, synthesizes trehalose from ADP-glucose and glucose. Has a much lower activity toward UDP-glucose and GDP-glucose. The reaction is reversible, the equilibrium strongly favors trehalose synthesis. This chain is Trehalose synthase, found in Pyrococcus furiosus (strain ATCC 43587 / DSM 3638 / JCM 8422 / Vc1).